Reading from the N-terminus, the 193-residue chain is Xanthine phosphoribosyltransferase (193 aa).

Residues leucine 20 and threonine 27 each coordinate xanthine. 128–132 (ANGQA) provides a ligand contact to 5-phospho-alpha-D-ribose 1-diphosphate. Lysine 156 contacts xanthine.

This sequence belongs to the purine/pyrimidine phosphoribosyltransferase family. Xpt subfamily. In terms of assembly, homodimer.

The protein localises to the cytoplasm. The enzyme catalyses XMP + diphosphate = xanthine + 5-phospho-alpha-D-ribose 1-diphosphate. It participates in purine metabolism; XMP biosynthesis via salvage pathway; XMP from xanthine: step 1/1. Converts the preformed base xanthine, a product of nucleic acid breakdown, to xanthosine 5'-monophosphate (XMP), so it can be reused for RNA or DNA synthesis. This chain is Xanthine phosphoribosyltransferase, found in Streptococcus agalactiae serotype Ia (strain ATCC 27591 / A909 / CDC SS700).